We begin with the raw amino-acid sequence, 111 residues long: UPF0060 membrane protein Ajs_1473 (111 aa).

A run of 4 helical transmembrane segments spans residues Ile8–Val28, Ser33–Leu53, Tyr65–Leu85, and Trp88–Ala108.

It belongs to the UPF0060 family.

Its subcellular location is the cell inner membrane. The protein is UPF0060 membrane protein Ajs_1473 of Acidovorax sp. (strain JS42).